Here is a 170-residue protein sequence, read N- to C-terminus: Ubiquitin-conjugating enzyme E2 J2-like (170 aa).

The 151-residue stretch at 15 to 165 (DCITRLKREF…NKTFCELFPY (151 aa)) folds into the UBC core domain. Cys-97 functions as the Glycyl thioester intermediate in the catalytic mechanism.

This sequence belongs to the ubiquitin-conjugating enzyme family.

It carries out the reaction S-ubiquitinyl-[E1 ubiquitin-activating enzyme]-L-cysteine + [E2 ubiquitin-conjugating enzyme]-L-cysteine = [E1 ubiquitin-activating enzyme]-L-cysteine + S-ubiquitinyl-[E2 ubiquitin-conjugating enzyme]-L-cysteine.. It participates in protein modification; protein ubiquitination. Functionally, catalyzes the covalent attachment of ubiquitin to other proteins. This is Ubiquitin-conjugating enzyme E2 J2-like from Dictyostelium discoideum (Social amoeba).